The following is a 336-amino-acid chain: Calcium uniporter protein 3, mitochondrial (336 aa).

The N-terminal 69 residues, 1–69 (MAMRKLLSKK…RFMHNSAMIR (69 aa)), are a transit peptide targeting the mitochondrion. 2 helical membrane-spanning segments follow: residues 231–251 (LWAG…LTFW) and 257–277 (VMEP…YAFF). A Selectivity filter motif is present at residues 255 to 263 (WDVMEPICF). Position 259 (E259) interacts with Ca(2+).

It belongs to the MCU (TC 1.A.77) family.

The protein resides in the mitochondrion inner membrane. The enzyme catalyses Ca(2+)(in) = Ca(2+)(out). Functionally, mitochondrial inner membrane calcium uniporter that mediates calcium uptake into mitochondria. Constitutes a pore-forming and calcium-conducting subunit. Mitochondrial calcium homeostasis plays key roles in cellular physiology and regulates cell bioenergetics, cytoplasmic calcium signals and activation of cell death pathways. This is Calcium uniporter protein 3, mitochondrial from Arabidopsis thaliana (Mouse-ear cress).